The chain runs to 503 residues: Protein phosphatase eya-1 (503 aa).

Residue Asp237 is the Nucleophile of the active site. The Mg(2+) site is built by Asp237 and Asp239. The active-site Proton donor is Asp239.

It belongs to the HAD-like hydrolase superfamily. EYA family. Interacts (via C-terminus) with ceh-34 (via N-terminus). Mg(2+) serves as cofactor. Expressed in body wall muscles. Expressed in BAG sensory neurons and in other head neurons.

Its subcellular location is the nucleus. It carries out the reaction O-phospho-L-tyrosyl-[protein] + H2O = L-tyrosyl-[protein] + phosphate. Tyrosine protein phosphatase. Acts probably as a transcription regulator in the embryonic and postembryonic development of several tissues including pharynx, vulva and gonads. Required for the development of anterior tissues during late embryogenesis. Together with ceh-34, required to specify the coelomocyte fate in embryonic and postembryonic precursors. In the anterior part of the embryo, prevents apoptosis in cells that are not fated to die. Together with ceh-34 activates proapoptotic factor egl-1 expression to promote motor neuron M4 sister cell apoptosis. Also promotes apoptosis of I1 pharyngeal neuron sister cell. Plays a role in locomotion and fertility. May play a role in resistance to heat and oxidative stresses. May cooperate with the transcription factors vab-3 and ceh-32 to repress transcription factor ets-5 expression in non BAG neuronal cells. In Caenorhabditis elegans, this protein is Protein phosphatase eya-1.